A 366-amino-acid chain; its full sequence is Sigma54-dependent transcriptional activator SfnR (366 aa).

Positions 21–250 constitute a Sigma-54 factor interaction domain; the sequence is QVFEDPRSQA…LENVIHHSLL (230 aa). Residues 49–56 and 112–121 each bind ATP; these read GETGTGKE and ANGGTLFLDE.

Involved in the dimethyl sulfide degradation pathway. Activates the expression of sfnG and sfnF. The sequence is that of Sigma54-dependent transcriptional activator SfnR from Pseudomonas putida (Arthrobacter siderocapsulatus).